The chain runs to 491 residues: Ran-binding protein 3-like (491 aa).

The RanBD1 domain maps to 270 to 441 (TFKSVLKFPN…VALRSLAKQG (172 aa)). Residues 440–468 (QGDGGPAESQSDTALPQLNGESCDEDEDE) are disordered. The span at 447-459 (ESQSDTALPQLNG) shows a compositional bias: polar residues.

Interacts with SMAD1, SMAD5 and SMAD8.

Its subcellular location is the nucleus. It is found in the cytoplasm. Its function is as follows. Nuclear export factor for BMP-specific SMAD1/5/8 that plays a critical role in terminating BMP signaling and regulating mesenchymal stem cell differentiation by blocking osteoblast differentiation to promote myogenic differention. Directly recognizes dephosphorylated SMAD1/5/8 and mediates their nuclear export in a Ran-dependent manner. The protein is Ran-binding protein 3-like (Ranbp3l) of Mus musculus (Mouse).